We begin with the raw amino-acid sequence, 519 residues long: Lysine 5,6-aminomutase alpha subunit (519 aa).

Position 57–59 (57–59) interacts with adenosylcob(III)alamin; sequence DEV. Pyridoxal 5'-phosphate is bound by residues 187–192, Ser241, Tyr266, Arg271, and Asn302; that span reads RTTGQS.

It belongs to the KamD family. As to quaternary structure, heterotetramer of 2 alpha and 2 beta subunits. Adenosylcob(III)alamin serves as cofactor. The cofactor is pyridoxal 5'-phosphate.

It carries out the reaction (3S)-3,6-diaminohexanoate = (3S,5S)-3,5-diaminohexanoate. The enzyme catalyses D-lysine = (2R,5S)-2,5-diaminohexanoate. The protein operates within amino-acid metabolism; lysine degradation. Rapidly inactivated in the presence of D-lysine and to a lesser extent in the absence of adenosylcobalamin (Adocbl). Activity is stable in the presence of Adocbl when D-lysine is absent. Adocbl imparts thermal stability at 37 degrees Celsius. Its function is as follows. Catalyzes the migration of the L-beta-lysine and D-lysine epsilon amino group to the delta carbon to produce 3,5-diaminohexanoate and 2,5-diaminohexanoate, respectively. The protein is Lysine 5,6-aminomutase alpha subunit (kamD) of Acetoanaerobium sticklandii (strain ATCC 12662 / DSM 519 / JCM 1433 / CCUG 9281 / NCIMB 10654 / HF) (Clostridium sticklandii).